Consider the following 348-residue polypeptide: Type IV methyl-directed restriction enzyme EcoKMcrBC (348 aa).

Its function is as follows. Modifies the specificity of McrB restriction by expanding the range of modified sequences restricted. Does not bind to DNA. The protein is Type IV methyl-directed restriction enzyme EcoKMcrBC (mcrC) of Escherichia coli (strain K12).